A 611-amino-acid polypeptide reads, in one-letter code: Probable methyltransferase PMT1 (611 aa).

Residues 1-11 (MRGRSEGGKKK) lie on the Cytoplasmic side of the membrane. Residues 12 to 32 (PVIVLLCVASVVLVFVYLFFG) traverse the membrane as a helical; Signal-anchor for type II membrane protein segment. The Lumenal segment spans residues 33–611 (SSNHKAIEYG…LTSESLRDLE (579 aa)). N345 carries N-linked (GlcNAc...) asparagine glycosylation.

The protein belongs to the methyltransferase superfamily.

It is found in the golgi apparatus membrane. In Arabidopsis thaliana (Mouse-ear cress), this protein is Probable methyltransferase PMT1.